Reading from the N-terminus, the 262-residue chain is Phosphonates import ATP-binding protein PhnC 3 (262 aa).

The ABC transporter domain occupies 3–245 (IQLECLSVTY…ELNRIYGNAE (243 aa)). 36-43 (GASGSGKS) contacts ATP.

Belongs to the ABC transporter superfamily. Phosphonates importer (TC 3.A.1.9.1) family. The complex is composed of two ATP-binding proteins (PhnC), two transmembrane proteins (PhnE) and a solute-binding protein (PhnD).

The protein localises to the cell inner membrane. It catalyses the reaction phosphonate(out) + ATP + H2O = phosphonate(in) + ADP + phosphate + H(+). In terms of biological role, part of the ABC transporter complex PhnCDE involved in phosphonates import. Responsible for energy coupling to the transport system. The sequence is that of Phosphonates import ATP-binding protein PhnC 3 from Nostoc sp. (strain PCC 7120 / SAG 25.82 / UTEX 2576).